The primary structure comprises 407 residues: S-adenosylmethionine synthase (407 aa).

Residue His-19 coordinates ATP. Asp-21 contacts Mg(2+). Residue Glu-47 participates in K(+) binding. L-methionine contacts are provided by Glu-60 and Gln-103. Positions 103 to 113 (QSQEIADGVDT) are flexible loop. A disordered region spans residues 108 to 131 (ADGVDTSQEARGDGHFEEDDRAGA). Residues 178–180 (DGK), Asp-258, 264–265 (RK), Ala-281, and Lys-285 contribute to the ATP site. Residue Asp-258 participates in L-methionine binding. Lys-289 contacts L-methionine.

This sequence belongs to the AdoMet synthase family. Homotetramer; dimer of dimers. Requires Mg(2+) as cofactor. It depends on K(+) as a cofactor.

The protein localises to the cytoplasm. It catalyses the reaction L-methionine + ATP + H2O = S-adenosyl-L-methionine + phosphate + diphosphate. Its pathway is amino-acid biosynthesis; S-adenosyl-L-methionine biosynthesis; S-adenosyl-L-methionine from L-methionine: step 1/1. Its function is as follows. Catalyzes the formation of S-adenosylmethionine (AdoMet) from methionine and ATP. The overall synthetic reaction is composed of two sequential steps, AdoMet formation and the subsequent tripolyphosphate hydrolysis which occurs prior to release of AdoMet from the enzyme. This Corynebacterium efficiens (strain DSM 44549 / YS-314 / AJ 12310 / JCM 11189 / NBRC 100395) protein is S-adenosylmethionine synthase.